The following is a 343-amino-acid chain: GDSL esterase/lipase EXL6 (343 aa).

Positions 1–21 (MFRGKIFVLSLFSIYVLSSAA) are cleaved as a signal peptide. Asn-24 is a glycosylation site (N-linked (GlcNAc...) asparagine). Ser-36 (nucleophile) is an active-site residue. Catalysis depends on residues Asp-318 and His-321.

The protein belongs to the 'GDSL' lipolytic enzyme family. Flower buds and pollen.

The protein localises to the secreted. The protein resides in the extracellular space. It localises to the extracellular matrix. Its subcellular location is the pollen coat. Functionally, required for the formation of pollen coats and male fertility. In Arabidopsis thaliana (Mouse-ear cress), this protein is GDSL esterase/lipase EXL6 (EXL6).